The sequence spans 308 residues: Ycf92-like protein (308 aa).

Transmembrane regions (helical) follow at residues 41–61 (FANN…TLIA), 75–95 (LLTL…GLGV), 153–173 (ISTI…TTAP), 192–212 (IPVT…PLVL), and 288–308 (WLAI…GNQI).

Belongs to the ycf92 family.

It is found in the membrane. This Nostoc sp. (strain PCC 7120 / SAG 25.82 / UTEX 2576) protein is Ycf92-like protein.